The chain runs to 368 residues: Branched-chain-amino-acid aminotransferase (368 aa).

Arginine 101 is a binding site for pyridoxal 5'-phosphate. Lysine 204 carries the post-translational modification N6-(pyridoxal phosphate)lysine. Pyridoxal 5'-phosphate is bound by residues tyrosine 209 and 271–272 (IT). Lysine 299 participates in a covalent cross-link: Isoglutamyl lysine isopeptide (Lys-Gln) (interchain with Q-Cter in protein Pup). Threonine 314 serves as a coordination point for pyridoxal 5'-phosphate.

This sequence belongs to the class-IV pyridoxal-phosphate-dependent aminotransferase family. As to quaternary structure, homodimer. Pyridoxal 5'-phosphate is required as a cofactor.

It carries out the reaction L-isoleucine + 2-oxoglutarate = (S)-3-methyl-2-oxopentanoate + L-glutamate. The enzyme catalyses L-valine + 2-oxoglutarate = 3-methyl-2-oxobutanoate + L-glutamate. The catalysed reaction is L-leucine + 2-oxoglutarate = 4-methyl-2-oxopentanoate + L-glutamate. The protein operates within amino-acid biosynthesis; L-isoleucine biosynthesis; L-isoleucine from 2-oxobutanoate: step 4/4. It functions in the pathway amino-acid biosynthesis; L-leucine biosynthesis; L-leucine from 3-methyl-2-oxobutanoate: step 4/4. It participates in amino-acid biosynthesis; L-valine biosynthesis; L-valine from pyruvate: step 4/4. Inhibited by ammonium sulfate at millimolar concentrations and by O-benzylhydroxylamine (Obe). Functionally, catalyzes the reversible transfers of an amino group from glutamate to the alpha-ketoacid of the respective amino acid in the final step in the biosynthesis of branchedchain amino acids. The amino acids can be ranked in the following order with respect to their efficiency as amino donor: Leu &gt; Ile &gt; Val. In Mycolicibacterium smegmatis (strain ATCC 700084 / mc(2)155) (Mycobacterium smegmatis), this protein is Branched-chain-amino-acid aminotransferase (ilvE).